The chain runs to 116 residues: Host transcription reprogramming factor 4 (116 aa).

Positions Met1–Gly24 are cleaved as a signal peptide. The segment at Gly24–Arg53 is disordered. The segment covering Val33–Pro47 has biased composition (polar residues). The C2H2-type; degenerate zinc finger occupies Phe74 to Phe96.

The protein localises to the secreted. Its subcellular location is the host nucleus. Its function is as follows. Probable secreted effector that translocates into the nuclei of host cells to reprogram the expression of targeted genes by binding on effector binding elements in rice. The polypeptide is Host transcription reprogramming factor 4 (Pyricularia oryzae (strain 70-15 / ATCC MYA-4617 / FGSC 8958) (Rice blast fungus)).